The following is a 318-amino-acid chain: Solute carrier family 25 member 34 (318 aa).

Solcar repeat units lie at residues 18–111 (VSPA…ACQA), 115–208 (QQPG…AKAW), and 218–309 (DSWL…LRKL). Helical transmembrane passes span 21–41 (AVDL…TNPL), 59–79 (TYPR…RADG), 112–134 (GLTQ…GAFV), 184–205 (VGAA…FTSA), 220–240 (WLAT…VMAP), and 292–315 (LGPH…RAQH).

It belongs to the mitochondrial carrier (TC 2.A.29) family.

It is found in the mitochondrion inner membrane. It catalyses the reaction a dicarboxylate(in) + sulfate(out) = a dicarboxylate(out) + sulfate(in). Functionally, putative antiporter that exchanges dicarboxylates and sulfur oxoanions across the inner membrane of mitochondria. This is Solute carrier family 25 member 34 (Slc25a34) from Rattus norvegicus (Rat).